The primary structure comprises 363 residues: Alanine racemase (363 aa).

The Proton acceptor; specific for D-alanine role is filled by lysine 35. The residue at position 35 (lysine 35) is an N6-(pyridoxal phosphate)lysine. Residue arginine 134 participates in substrate binding. The Proton acceptor; specific for L-alanine role is filled by tyrosine 259. Residue methionine 307 coordinates substrate.

It belongs to the alanine racemase family. Pyridoxal 5'-phosphate serves as cofactor.

It catalyses the reaction L-alanine = D-alanine. It functions in the pathway amino-acid biosynthesis; D-alanine biosynthesis; D-alanine from L-alanine: step 1/1. In terms of biological role, catalyzes the interconversion of L-alanine and D-alanine. May also act on other amino acids. The polypeptide is Alanine racemase (alr) (Shewanella denitrificans (strain OS217 / ATCC BAA-1090 / DSM 15013)).